Here is a 467-residue protein sequence, read N- to C-terminus: Replication factor C large subunit (467 aa).

47-54 is a binding site for ATP; it reads GPPGVGKT.

It belongs to the activator 1 small subunits family. RfcL subfamily. In terms of assembly, heteromultimer composed of small subunits (RfcS) and large subunits (RfcL).

In terms of biological role, part of the RFC clamp loader complex which loads the PCNA sliding clamp onto DNA. The polypeptide is Replication factor C large subunit (Methanothrix thermoacetophila (strain DSM 6194 / JCM 14653 / NBRC 101360 / PT) (Methanosaeta thermophila)).